We begin with the raw amino-acid sequence, 345 residues long: D-fructose 1,6-bisphosphatase class 2/sedoheptulose 1,7-bisphosphatase (345 aa).

Residues Asp33, Glu57, Asp97, and Glu100 each coordinate Mn(2+). Substrate contacts are provided by residues Glu100–Thr102, Tyr131, Arg176–Arg178, and Asp198–Asp200. Glu225 is a binding site for Mn(2+).

It belongs to the FBPase class 2 family. As to quaternary structure, homotetramer. The cofactor is Mn(2+).

The catalysed reaction is beta-D-fructose 1,6-bisphosphate + H2O = beta-D-fructose 6-phosphate + phosphate. It carries out the reaction D-sedoheptulose 1,7-bisphosphate + H2O = D-sedoheptulose 7-phosphate + phosphate. The protein operates within carbohydrate biosynthesis; Calvin cycle. Functionally, catalyzes the hydrolysis of fructose 1,6-bisphosphate (Fru 1,6-P2) and sedoheptulose 1,7-bisphosphate (Sed 1,7-P2) to fructose 6-phosphate and sedoheptulose 7-phosphate, respectively. The sequence is that of D-fructose 1,6-bisphosphatase class 2/sedoheptulose 1,7-bisphosphatase from Trichormus variabilis (strain ATCC 29413 / PCC 7937) (Anabaena variabilis).